Consider the following 429-residue polypeptide: Nicotinate phosphoribosyltransferase (429 aa).

Nicotinate-binding residues include Tyr15, Phe177, and Thr229. The residue at position 232 (His232) is a Phosphohistidine; by autocatalysis. Arg294 lines the nicotinate pocket. Thr355 is a 5-phospho-alpha-D-ribose 1-diphosphate binding site.

This sequence belongs to the NAPRTase family. Transiently phosphorylated on a His residue during the reaction cycle. Phosphorylation strongly increases the affinity for substrates and increases the rate of nicotinate D-ribonucleotide production. Dephosphorylation regenerates the low-affinity form of the enzyme, leading to product release.

It is found in the cytoplasm. The protein resides in the nucleus. It carries out the reaction nicotinate + 5-phospho-alpha-D-ribose 1-diphosphate + ATP + H2O = nicotinate beta-D-ribonucleotide + ADP + phosphate + diphosphate. Its pathway is cofactor biosynthesis; NAD(+) biosynthesis; nicotinate D-ribonucleotide from nicotinate: step 1/1. In terms of biological role, catalyzes the first step in the biosynthesis of NAD from nicotinic acid, the ATP-dependent synthesis of beta-nicotinate D-ribonucleotide from nicotinate and 5-phospho-D-ribose 1-phosphate. Essential for growth under anaerobic conditions. The sequence is that of Nicotinate phosphoribosyltransferase (NPT1) from Saccharomyces cerevisiae (strain ATCC 204508 / S288c) (Baker's yeast).